Consider the following 381-residue polypeptide: UDP-N-acetylglucosamine--N-acetylmuramyl-(pentapeptide) pyrophosphoryl-undecaprenol N-acetylglucosamine transferase (381 aa).

Residues 10–12 (TGG), N124, R165, S190, I245, and Q290 contribute to the UDP-N-acetyl-alpha-D-glucosamine site. Residues 361–381 (WGSPAGQERPGHGPVRPPDLA) are disordered.

The protein belongs to the glycosyltransferase 28 family. MurG subfamily.

It localises to the cell inner membrane. It catalyses the reaction di-trans,octa-cis-undecaprenyl diphospho-N-acetyl-alpha-D-muramoyl-L-alanyl-D-glutamyl-meso-2,6-diaminopimeloyl-D-alanyl-D-alanine + UDP-N-acetyl-alpha-D-glucosamine = di-trans,octa-cis-undecaprenyl diphospho-[N-acetyl-alpha-D-glucosaminyl-(1-&gt;4)]-N-acetyl-alpha-D-muramoyl-L-alanyl-D-glutamyl-meso-2,6-diaminopimeloyl-D-alanyl-D-alanine + UDP + H(+). The protein operates within cell wall biogenesis; peptidoglycan biosynthesis. In terms of biological role, cell wall formation. Catalyzes the transfer of a GlcNAc subunit on undecaprenyl-pyrophosphoryl-MurNAc-pentapeptide (lipid intermediate I) to form undecaprenyl-pyrophosphoryl-MurNAc-(pentapeptide)GlcNAc (lipid intermediate II). The chain is UDP-N-acetylglucosamine--N-acetylmuramyl-(pentapeptide) pyrophosphoryl-undecaprenol N-acetylglucosamine transferase from Anaeromyxobacter sp. (strain Fw109-5).